Consider the following 361-residue polypeptide: Glucose 1-dehydrogenase (361 aa).

A Zn(2+)-binding site is contributed by Cys-41. Residue Thr-43 participates in substrate binding. Zn(2+) is bound by residues His-68 and Glu-69. 3 residues coordinate substrate: Glu-119, Glu-156, and Asn-160. Zn(2+) is bound at residue Glu-156. NADP(+)-binding positions include Asn-216–His-218, Phe-275–Thr-277, Ser-304–Asp-306, and Lys-349. A substrate-binding site is contributed by Asp-306.

The protein belongs to the zinc-containing alcohol dehydrogenase family. Glucose 1-dehydrogenase subfamily. As to quaternary structure, homotetramer. It depends on Zn(2+) as a cofactor.

The catalysed reaction is D-glucose + NAD(+) = D-glucono-1,5-lactone + NADH + H(+). It catalyses the reaction D-glucose + NADP(+) = D-glucono-1,5-lactone + NADPH + H(+). It carries out the reaction D-galactose + NAD(+) = D-galactono-1,4-lactone + NADH + H(+). The enzyme catalyses D-galactose + NADP(+) = D-galactono-1,5-lactone + NADPH + H(+). Catalyzes the NAD(P)(+)-dependent oxidation of D-glucose to D-gluconate via gluconolactone. Is also significantly active with galactose as substrate, but not with mannose or glucose 6-phosphate. Can utilize both NAD(+) and NADP(+) as electron acceptor, with a marked preference for NADP(+). Physiologically, may be involved in the degradation of both glucose and galactose through a non-phosphorylative variant of the Entner-Doudoroff pathway. This chain is Glucose 1-dehydrogenase, found in Thermoplasma acidophilum (strain ATCC 25905 / DSM 1728 / JCM 9062 / NBRC 15155 / AMRC-C165).